The chain runs to 416 residues: Calreticulin (416 aa).

An N-terminal signal peptide occupies residues 1-17 (MLLSVPLLLGLLGLAAA). An N-domain region spans residues 18–197 (DPAIYFKEQF…NSQVESGSLE (180 aa)). Glutamine 26 is a Ca(2+) binding site. Lysine 48 is subject to N6-acetyllysine. 2 residues coordinate Ca(2+): lysine 62 and lysine 64. Residue lysine 64 is modified to N6-(2-hydroxyisobutyryl)lysine. Cysteines 105 and 137 form a disulfide. Tyrosine 109, lysine 111, tyrosine 128, and aspartate 135 together coordinate an alpha-D-glucoside. Lysine 159 is modified (N6-acetyllysine). One copy of the 1-1 repeat lies at 191-202 (VESGSLEDDWDF). A 4 X approximate repeats region spans residues 191–255 (VESGSLEDDW…DAKKPEDWDE (65 aa)). A disordered region spans residues 193–277 (SGSLEDDWDF…NPEYKGEWKP (85 aa)). Residues 198-308 (DDWDFLPPKK…YSPDANIYAY (111 aa)) form a P-domain region. Residues 207–251 (KIKDPDAAKPEDWDERAKIDDPTDSKPEDWDKPEHIPDPDAKKPE) are compositionally biased toward basic and acidic residues. Lysine 209 carries the N6-acetyllysine modification. Repeat copies occupy residues 210–221 (DPDAAKPEDWDE), 227–238 (DPTDSKPEDWDK), 244–255 (DPDAKKPEDWDE), 259–269 (GEWEPPVIQNP), 273–283 (GEWKPRQIDNP), and 287–297 (GTWIHPEIDNP). Residues 237-270 (DKPEHIPDPDAKKPEDWDEEMDGEWEPPVIQNPE) form an interaction with PPIB region. The segment covering 252–261 (DWDEEMDGEW) has biased composition (acidic residues). Positions 259–297 (GEWEPPVIQNPEYKGEWKPRQIDNPDYKGTWIHPEIDNP) are 3 X approximate repeats. A C-domain region spans residues 309-416 (DSFAVLGLDL…ESPGQAKDEL (108 aa)). Aspartate 317 is a binding site for an alpha-D-glucoside. Aspartate 328 is a binding site for Ca(2+). Residues 350–416 (TKAAEKQMKD…ESPGQAKDEL (67 aa)) form a disordered region. Basic and acidic residues predominate over residues 352-379 (AAEKQMKDKQDEEQRLKEEEEDKKRKEE). A compositionally biased stretch (acidic residues) spans 380–408 (EEAEDKEDDDDRDEDEDEEDEKEEDEEES). Residues 413 to 416 (KDEL) carry the Prevents secretion from ER motif.

Belongs to the calreticulin family. In terms of assembly, monomer. Interacts with GABARAP, NR3C1, PDIA3/ERp57 and TRIM21. Interacts (via P-domain) with PDIA5. Interacts with PPIB. Interacts with SPACA9. Component of an EIF2 complex at least composed of CELF1/CUGBP1, CALR, CALR3, EIF2S1, EIF2S2, HSP90B1 and HSPA5. Interacts with CLCC1.

The protein localises to the endoplasmic reticulum lumen. It localises to the cytoplasm. Its subcellular location is the cytosol. It is found in the cytolytic granule. The protein resides in the secreted. The protein localises to the extracellular space. It localises to the extracellular matrix. Its subcellular location is the cell surface. It is found in the sarcoplasmic reticulum lumen. The protein resides in the cytoplasmic vesicle. The protein localises to the secretory vesicle. It localises to the cortical granule. Functionally, calcium-binding chaperone that promotes folding, oligomeric assembly and quality control in the endoplasmic reticulum (ER) via the calreticulin/calnexin cycle. This lectin interacts transiently with almost all of the monoglucosylated glycoproteins that are synthesized in the ER. Interacts with the DNA-binding domain of NR3C1 and mediates its nuclear export. Involved in maternal gene expression regulation. May participate in oocyte maturation via the regulation of calcium homeostasis. Present in the cortical granules of non-activated oocytes, is exocytosed during the cortical reaction in response to oocyte activation and might participate in the block to polyspermy. In Mus musculus (Mouse), this protein is Calreticulin (Calr).